The chain runs to 889 residues: Coatomer subunit gamma-2 (889 aa).

HEAT repeat units follow at residues 67-102 (VEAT…SPSA), 103-140 (DEVI…STLL), 289-326 (RELT…THPL), 328-360 (VTNC…TGNE), and 361-398 (SSVD…KFPL). The disordered stretch occupies residues 596–617 (PLAEKKTTGKKPTGPASALSGP).

The protein belongs to the COPG family. Oligomeric complex that consists of at least the alpha, beta, beta', gamma, delta, epsilon and zeta subunits.

The protein localises to the cytoplasm. It localises to the golgi apparatus membrane. The protein resides in the cytoplasmic vesicle. Its subcellular location is the COPI-coated vesicle membrane. Its function is as follows. The coatomer is a cytosolic protein complex that binds to dilysine motifs and reversibly associates with Golgi non-clathrin-coated vesicles, which further mediate biosynthetic protein transport from the ER, via the Golgi up to the trans Golgi network. Coatomer complex is required for budding from Golgi membranes, and is essential for the retrograde Golgi-to-ER transport of dilysine-tagged proteins. The polypeptide is Coatomer subunit gamma-2 (Oryza sativa subsp. japonica (Rice)).